We begin with the raw amino-acid sequence, 749 residues long: 5-methyltetrahydropteroyltriglutamate--homocysteine methyltransferase (749 aa).

5-methyltetrahydropteroyltri-L-glutamate is bound by residues 15-18 (RELK) and Lys-114. Residues 425–427 (IGS) and Glu-478 each bind L-homocysteine. L-methionine contacts are provided by residues 425-427 (IGS) and Glu-478. Trp-555 contributes to the 5-methyltetrahydropteroyltri-L-glutamate binding site. An L-homocysteine-binding site is contributed by Asp-593. Asp-593 lines the L-methionine pocket. Glu-599 is a binding site for 5-methyltetrahydropteroyltri-L-glutamate. The Zn(2+) site is built by His-636, Cys-638, and Glu-660. Residue His-689 is the Proton donor of the active site. Cys-721 contributes to the Zn(2+) binding site.

This sequence belongs to the vitamin-B12 independent methionine synthase family. Requires Zn(2+) as cofactor.

It catalyses the reaction 5-methyltetrahydropteroyltri-L-glutamate + L-homocysteine = tetrahydropteroyltri-L-glutamate + L-methionine. It functions in the pathway amino-acid biosynthesis; L-methionine biosynthesis via de novo pathway; L-methionine from L-homocysteine (MetE route): step 1/1. Functionally, catalyzes the transfer of a methyl group from 5-methyltetrahydrofolate to homocysteine resulting in methionine formation. This is 5-methyltetrahydropteroyltriglutamate--homocysteine methyltransferase from Streptococcus pneumoniae serotype 2 (strain D39 / NCTC 7466).